Here is a 483-residue protein sequence, read N- to C-terminus: Glutamyl-tRNA(Gln) amidotransferase subunit A (483 aa).

Active-site charge relay system residues include K76 and S151. S175 functions as the Acyl-ester intermediate in the catalytic mechanism.

The protein belongs to the amidase family. GatA subfamily. In terms of assembly, heterotrimer of A, B and C subunits.

It carries out the reaction L-glutamyl-tRNA(Gln) + L-glutamine + ATP + H2O = L-glutaminyl-tRNA(Gln) + L-glutamate + ADP + phosphate + H(+). Functionally, allows the formation of correctly charged Gln-tRNA(Gln) through the transamidation of misacylated Glu-tRNA(Gln) in organisms which lack glutaminyl-tRNA synthetase. The reaction takes place in the presence of glutamine and ATP through an activated gamma-phospho-Glu-tRNA(Gln). This chain is Glutamyl-tRNA(Gln) amidotransferase subunit A, found in Chromobacterium violaceum (strain ATCC 12472 / DSM 30191 / JCM 1249 / CCUG 213 / NBRC 12614 / NCIMB 9131 / NCTC 9757 / MK).